Here is a 170-residue protein sequence, read N- to C-terminus: Acireductone dioxygenase (170 aa).

Fe(2+)-binding residues include His99, His101, Glu105, and His144. Ni(2+) is bound by residues His99, His101, Glu105, and His144.

It belongs to the acireductone dioxygenase (ARD) family. In terms of assembly, monomer. Requires Fe(2+) as cofactor. It depends on Ni(2+) as a cofactor.

It catalyses the reaction 1,2-dihydroxy-5-(methylsulfanyl)pent-1-en-3-one + O2 = 3-(methylsulfanyl)propanoate + CO + formate + 2 H(+). It carries out the reaction 1,2-dihydroxy-5-(methylsulfanyl)pent-1-en-3-one + O2 = 4-methylsulfanyl-2-oxobutanoate + formate + 2 H(+). It participates in amino-acid biosynthesis; L-methionine biosynthesis via salvage pathway; L-methionine from S-methyl-5-thio-alpha-D-ribose 1-phosphate: step 5/6. In terms of biological role, catalyzes 2 different reactions between oxygen and the acireductone 1,2-dihydroxy-3-keto-5-methylthiopentene (DHK-MTPene) depending upon the metal bound in the active site. Fe-containing acireductone dioxygenase (Fe-ARD) produces formate and 2-keto-4-methylthiobutyrate (KMTB), the alpha-ketoacid precursor of methionine in the methionine recycle pathway. Ni-containing acireductone dioxygenase (Ni-ARD) produces methylthiopropionate, carbon monoxide and formate, and does not lie on the methionine recycle pathway. In Bacillus cereus (strain ATCC 10987 / NRS 248), this protein is Acireductone dioxygenase.